The following is a 558-amino-acid chain: Urocanate hydratase (558 aa).

Residues 54 to 55 (GG), glutamine 132, 178 to 180 (GMG), glutamate 198, 244 to 245 (NA), 265 to 269 (QTSAH), 275 to 276 (YL), and tyrosine 324 each bind NAD(+). Residue cysteine 412 is part of the active site. Glycine 494 is an NAD(+) binding site.

Belongs to the urocanase family. NAD(+) serves as cofactor.

The protein localises to the cytoplasm. It catalyses the reaction 4-imidazolone-5-propanoate = trans-urocanate + H2O. Its pathway is amino-acid degradation; L-histidine degradation into L-glutamate; N-formimidoyl-L-glutamate from L-histidine: step 2/3. In terms of biological role, catalyzes the conversion of urocanate to 4-imidazolone-5-propionate. This is Urocanate hydratase from Acinetobacter baumannii (strain SDF).